Consider the following 46-residue polypeptide: Homeobox protein Hox-D4 (46 aa).

The homeobox DNA-binding region spans 1–46 (VNSNYTGGEPKRSRTAYTRQQVLELEKEFLFNRYLTRRRRIQHTLT).

This sequence belongs to the Antp homeobox family. Deformed subfamily. Forms a DNA-binding heterodimer with transcription factor PBX1.

It is found in the nucleus. Sequence-specific transcription factor which is part of a developmental regulatory system that provides cells with specific positional identities on the anterior-posterior axis. The polypeptide is Homeobox protein Hox-D4 (HOXD4) (Ovis aries (Sheep)).